Reading from the N-terminus, the 61-residue chain is Small ribosomal subunit protein uS14 (61 aa).

4 residues coordinate Zn(2+): Cys-24, Cys-27, Cys-40, and Cys-43.

Belongs to the universal ribosomal protein uS14 family. Zinc-binding uS14 subfamily. In terms of assembly, part of the 30S ribosomal subunit. Contacts proteins S3 and S10. The cofactor is Zn(2+).

Functionally, binds 16S rRNA, required for the assembly of 30S particles and may also be responsible for determining the conformation of the 16S rRNA at the A site. This is Small ribosomal subunit protein uS14 from Pseudothermotoga lettingae (strain ATCC BAA-301 / DSM 14385 / NBRC 107922 / TMO) (Thermotoga lettingae).